Consider the following 338-residue polypeptide: Anthranilate phosphoribosyltransferase (338 aa).

Residues glycine 81, 84 to 85 (GD), serine 89, 91 to 94 (NVST), 109 to 117 (KHGNRALSS), and alanine 121 contribute to the 5-phospho-alpha-D-ribose 1-diphosphate site. Glycine 81 is an anthranilate binding site. Serine 93 contributes to the Mg(2+) binding site. Position 112 (asparagine 112) interacts with anthranilate. Arginine 167 contributes to the anthranilate binding site. Aspartate 226 and glutamate 227 together coordinate Mg(2+).

Belongs to the anthranilate phosphoribosyltransferase family. Homodimer. The cofactor is Mg(2+).

It catalyses the reaction N-(5-phospho-beta-D-ribosyl)anthranilate + diphosphate = 5-phospho-alpha-D-ribose 1-diphosphate + anthranilate. It functions in the pathway amino-acid biosynthesis; L-tryptophan biosynthesis; L-tryptophan from chorismate: step 2/5. In terms of biological role, catalyzes the transfer of the phosphoribosyl group of 5-phosphorylribose-1-pyrophosphate (PRPP) to anthranilate to yield N-(5'-phosphoribosyl)-anthranilate (PRA). The sequence is that of Anthranilate phosphoribosyltransferase from Rhodopseudomonas palustris (strain ATCC BAA-98 / CGA009).